The chain runs to 132 residues: Small ribosomal subunit protein uS8 (132 aa).

This sequence belongs to the universal ribosomal protein uS8 family. In terms of assembly, part of the 30S ribosomal subunit. Contacts proteins S5 and S12.

One of the primary rRNA binding proteins, it binds directly to 16S rRNA central domain where it helps coordinate assembly of the platform of the 30S subunit. This Heliobacterium modesticaldum (strain ATCC 51547 / Ice1) protein is Small ribosomal subunit protein uS8.